The sequence spans 287 residues: Small ribosomal subunit biogenesis GTPase RsgA (287 aa).

Positions 61–218 constitute a CP-type G domain; that stretch reads SSELIRPTVA…LVDTPGFTTL (158 aa). GTP is bound by residues 110–113 and 161–169; these read NKED and GPSGAGKST. Positions 242, 247, 249, and 255 each coordinate Zn(2+).

The protein belongs to the TRAFAC class YlqF/YawG GTPase family. RsgA subfamily. In terms of assembly, monomer. Associates with 30S ribosomal subunit, binds 16S rRNA. Requires Zn(2+) as cofactor.

It is found in the cytoplasm. One of several proteins that assist in the late maturation steps of the functional core of the 30S ribosomal subunit. Helps release RbfA from mature subunits. May play a role in the assembly of ribosomal proteins into the subunit. Circularly permuted GTPase that catalyzes slow GTP hydrolysis, GTPase activity is stimulated by the 30S ribosomal subunit. This Clostridium perfringens (strain 13 / Type A) protein is Small ribosomal subunit biogenesis GTPase RsgA.